A 351-amino-acid chain; its full sequence is Prostaglandin reductase 2 (351 aa).

Residue phenylalanine 99–tyrosine 100 participates in substrate binding. Residues glycine 165–glycine 168, lysine 192, tyrosine 208, asparagine 231, cysteine 253–tyrosine 259, phenylalanine 287–valine 289, and asparagine 337 each bind NADP(+). Position 288-290 (threonine 288–leucine 290) interacts with substrate.

It belongs to the NADP-dependent oxidoreductase L4BD family. As to quaternary structure, monomer. As to expression, widely expressed with highest levels in adipose tissues.

Its subcellular location is the cytoplasm. It carries out the reaction 13,14-dihydro-15-oxo-prostaglandin E2 + NAD(+) = 15-oxoprostaglandin E2 + NADH + H(+). It catalyses the reaction 13,14-dihydro-15-oxo-prostaglandin E2 + NADP(+) = 15-oxoprostaglandin E2 + NADPH + H(+). The enzyme catalyses 13,14-dihydro-15-oxo-PGF2alpha + NADP(+) = 15-oxoprostaglandin F2alpha + NADPH + H(+). The catalysed reaction is 13,14-dihydro-15-oxo-prostaglandin E1 + NADP(+) = 15-oxoprostaglandin E1 + NADPH + H(+). It carries out the reaction 13,14-dihydro-15-oxo-prostaglandin F1alpha + NADP(+) = 15-oxoprostaglandin F1alpha + NADPH + H(+). Functions as 15-oxo-prostaglandin 13-reductase and acts on 15-keto-PGE1, 15-keto-PGE2, 15-keto-PGE1-alpha and 15-keto-PGE2-alpha with highest activity towards 15-keto-PGE2. Overexpression represses transcriptional activity of PPARG and inhibits adipocyte differentiation. This chain is Prostaglandin reductase 2, found in Mus musculus (Mouse).